Here is a 327-residue protein sequence, read N- to C-terminus: Complex I intermediate-associated protein 30, mitochondrial (327 aa).

The N-terminal 24 residues, 1-24 (MALVHKLLRGTYFLRKFXKPTSAL), are a transit peptide targeting the mitochondrion. A disordered region spans residues 42–63 (PVASPGKASSQRKTEGDLQGDH). Basic and acidic residues predominate over residues 53–63 (RKTEGDLQGDH). Serine 318 carries the phosphoserine modification.

Belongs to the CIA30 family. Part of the mitochondrial complex I assembly/MCIA complex that comprises at least the core subunits TMEM126B, NDUFAF1, ECSIT and ACAD9 and complement subunits such as COA1 and TMEM186. Interacts with ECSIT. Interacts with ACAD9. At early stages of complex I assembly, it is found in intermediate subcomplexes that contain different subunits including NDUFB6, NDUFA6, NDUFA9, NDUFS3, NDUFS7, ND1, ND2 and ND3. Interacts with TMEM70 and TMEM242.

It localises to the mitochondrion. The protein resides in the mitochondrion matrix. As part of the MCIA complex, involved in the assembly of the mitochondrial complex I. This is Complex I intermediate-associated protein 30, mitochondrial from Pan troglodytes (Chimpanzee).